The following is a 160-amino-acid chain: Probable transcriptional regulator YgiV (160 aa).

Its function is as follows. Represses expression of mcbR. This is Probable transcriptional regulator YgiV (ygiV) from Escherichia coli (strain K12).